The chain runs to 211 residues: Urease accessory protein UreF (211 aa).

It belongs to the UreF family. In terms of assembly, ureD, UreF and UreG form a complex that acts as a GTP-hydrolysis-dependent molecular chaperone, activating the urease apoprotein by helping to assemble the nickel containing metallocenter of UreC. The UreE protein probably delivers the nickel.

The protein resides in the cytoplasm. Required for maturation of urease via the functional incorporation of the urease nickel metallocenter. The sequence is that of Urease accessory protein UreF from Mycobacterium sp. (strain JLS).